The primary structure comprises 316 residues: Aspartate carbamoyltransferase catalytic subunit (316 aa).

Carbamoyl phosphate-binding residues include arginine 58 and threonine 59. An L-aspartate-binding site is contributed by lysine 86. Residues arginine 108, histidine 136, and glutamine 139 each contribute to the carbamoyl phosphate site. Positions 169 and 223 each coordinate L-aspartate. Carbamoyl phosphate-binding residues include glycine 264 and proline 265.

This sequence belongs to the aspartate/ornithine carbamoyltransferase superfamily. ATCase family. In terms of assembly, heterododecamer (2C3:3R2) of six catalytic PyrB chains organized as two trimers (C3), and six regulatory PyrI chains organized as three dimers (R2).

It catalyses the reaction carbamoyl phosphate + L-aspartate = N-carbamoyl-L-aspartate + phosphate + H(+). The protein operates within pyrimidine metabolism; UMP biosynthesis via de novo pathway; (S)-dihydroorotate from bicarbonate: step 2/3. Catalyzes the condensation of carbamoyl phosphate and aspartate to form carbamoyl aspartate and inorganic phosphate, the committed step in the de novo pyrimidine nucleotide biosynthesis pathway. This chain is Aspartate carbamoyltransferase catalytic subunit, found in Dinoroseobacter shibae (strain DSM 16493 / NCIMB 14021 / DFL 12).